Reading from the N-terminus, the 377-residue chain is 3-dehydroquinate synthase (377 aa).

NAD(+) is bound by residues 115-119 (GVIGD), 139-140 (TS), Lys-152, and Lys-161. Zn(2+) is bound by residues Glu-194, His-256, and His-275.

The protein belongs to the sugar phosphate cyclases superfamily. Dehydroquinate synthase family. Requires NAD(+) as cofactor. It depends on Co(2+) as a cofactor. Zn(2+) serves as cofactor.

It is found in the cytoplasm. The catalysed reaction is 7-phospho-2-dehydro-3-deoxy-D-arabino-heptonate = 3-dehydroquinate + phosphate. Its pathway is metabolic intermediate biosynthesis; chorismate biosynthesis; chorismate from D-erythrose 4-phosphate and phosphoenolpyruvate: step 2/7. Its function is as follows. Catalyzes the conversion of 3-deoxy-D-arabino-heptulosonate 7-phosphate (DAHP) to dehydroquinate (DHQ). The sequence is that of 3-dehydroquinate synthase from Rhizobium meliloti (strain 1021) (Ensifer meliloti).